A 167-amino-acid chain; its full sequence is Translationally-controlled tumor protein homolog (167 aa).

The TCTP domain occupies 1 to 167 (MIIYKDIFSG…WKHGIDEEKI (167 aa)).

This sequence belongs to the TCTP family.

It localises to the cytoplasm. Its subcellular location is the cytoskeleton. Its function is as follows. Involved in protein synthesis. Involved in microtubule stabilization. This is Translationally-controlled tumor protein homolog from Candida glabrata (strain ATCC 2001 / BCRC 20586 / JCM 3761 / NBRC 0622 / NRRL Y-65 / CBS 138) (Yeast).